The sequence spans 469 residues: Hydrogen cyanide synthase subunit HcnB (469 aa).

Heterotrimer of HcnA, HcnB and HcnC.

Its subcellular location is the cell membrane. The catalysed reaction is glycine + 2 A = hydrogen cyanide + 2 AH2 + CO2. In terms of biological role, a three-component membrane-bound flavoenzyme that catalyzes the formation of hydrogen cyanide, a secondary metabolite, by transfer of electrons to a cyanide-resistant branch of the aerobic respiratory chain. Contributes to suppression of black root rot of tobacco. In Pseudomonas protegens (strain DSM 19095 / LMG 27888 / CFBP 6595 / CHA0), this protein is Hydrogen cyanide synthase subunit HcnB.